The sequence spans 501 residues: Glutamyl-tRNA(Gln) amidotransferase subunit A (501 aa).

Active-site charge relay system residues include Lys-84 and Ser-159. Catalysis depends on Ser-183, which acts as the Acyl-ester intermediate.

It belongs to the amidase family. GatA subfamily. Heterotrimer of A, B and C subunits.

It catalyses the reaction L-glutamyl-tRNA(Gln) + L-glutamine + ATP + H2O = L-glutaminyl-tRNA(Gln) + L-glutamate + ADP + phosphate + H(+). Allows the formation of correctly charged Gln-tRNA(Gln) through the transamidation of misacylated Glu-tRNA(Gln) in organisms which lack glutaminyl-tRNA synthetase. The reaction takes place in the presence of glutamine and ATP through an activated gamma-phospho-Glu-tRNA(Gln). The polypeptide is Glutamyl-tRNA(Gln) amidotransferase subunit A (Streptomyces avermitilis (strain ATCC 31267 / DSM 46492 / JCM 5070 / NBRC 14893 / NCIMB 12804 / NRRL 8165 / MA-4680)).